The primary structure comprises 283 residues: Cilia- and flagella-associated protein 77 (283 aa).

A disordered region spans residues 151-170 (DQEDRRQKEPPPIPPNMTFG).

It belongs to the CFAP77 family. Microtubule inner protein component of sperm flagellar doublet microtubules.

The protein localises to the cytoplasm. Its subcellular location is the cytoskeleton. The protein resides in the cilium axoneme. It is found in the flagellum axoneme. Microtubule inner protein (MIP) part of the dynein-decorated doublet microtubules (DMTs) in cilia axoneme, which is required for motile cilia beating. The protein is Cilia- and flagella-associated protein 77 of Mus musculus (Mouse).